A 389-amino-acid polypeptide reads, in one-letter code: Chalcone synthase 2 (389 aa).

Residue Cys164 is part of the active site.

This sequence belongs to the thiolase-like superfamily. Chalcone/stilbene synthases family.

The catalysed reaction is (E)-4-coumaroyl-CoA + 3 malonyl-CoA + 3 H(+) = 2',4,4',6'-tetrahydroxychalcone + 3 CO2 + 4 CoA. The protein operates within secondary metabolite biosynthesis; flavonoid biosynthesis. The primary product of this enzyme is 4,2',4',6'-tetrahydroxychalcone (also termed naringenin-chalcone or chalcone) which can under specific conditions spontaneously isomerize into naringenin. The protein is Chalcone synthase 2 (CHS2) of Solanum lycopersicum (Tomato).